The sequence spans 284 residues: Trimeric intracellular cation channel type B-A (284 aa).

Topologically, residues 1 to 15 (MESLSELSVQFSQLS) are lumenal. A helical membrane pass occupies residues 16 to 33 (MFPFFDMAHYVVSVMSAR). At 34–46 (EQAGALDIAARSP) the chain is on the cytoplasmic side. A helical membrane pass occupies residues 47–68 (MASWFSAMLYCFGGGILSSILL). Topologically, residues 69 to 79 (AEPPIAVLSNT) are lumenal. A helical transmembrane segment spans residues 80-99 (TNIMLASTIWYMVYYFPYDL). The Cytoplasmic segment spans residues 100–102 (FYN). The chain crosses the membrane as a helical span at residues 103–121 (CFFFLPIRLIIAGMKEVTR). Residues Lys117 and Arg121 each contribute to the a 1,2-diacyl-sn-glycero-3-phospho-(1D-myo-inositol-4,5-bisphosphate) site. Over 122–137 (TWKILSGVTHAHSHYK) the chain is Lumenal. A helical transmembrane segment spans residues 138-155 (DALLVMITIGWARGAGGG). The Cytoplasmic portion of the chain corresponds to 156 to 177 (LISNFEQLVRGVWKPESNEFLK). A helical transmembrane segment spans residues 178–195 (MSYPVKVTLIGAVLFTLQ). Residues 196 to 206 (HGHYLPISRHN) are Lumenal-facing. Residues 207 to 224 (LMLIYTMFLVLIKVTMML) form a helical membrane-spanning segment. Topologically, residues 225–284 (THSTASPFLPLETPLQRILFGQRQKPSEVRQSASSSGAKGKPSKKTLDKDSGEQSKKKDS) are cytoplasmic. The tract at residues 246–284 (QRQKPSEVRQSASSSGAKGKPSKKTLDKDSGEQSKKKDS) is disordered. Residues 269–284 (KTLDKDSGEQSKKKDS) show a composition bias toward basic and acidic residues.

Belongs to the TMEM38 family. In terms of assembly, homotrimer; conformation seems to be controled by binding to diacylglycerol (DAG).

Its subcellular location is the endoplasmic reticulum membrane. The enzyme catalyses K(+)(in) = K(+)(out). Channel activity is activated by increased cytosolic Ca(2+) levels and blocked by luminal high Ca(2+) levels. In terms of biological role, intracellular monovalent cation channel required for maintenance of rapid intracellular calcium release. Acts as a potassium counter-ion channel that functions in synchronization with calcium release from intracellular stores. Activated by increased cytosolic Ca(2+) levels. The chain is Trimeric intracellular cation channel type B-A (tmem38b-a) from Xenopus laevis (African clawed frog).